Here is a 500-residue protein sequence, read N- to C-terminus: 4-aminobutyrate aminotransferase, mitochondrial (500 aa).

The transit peptide at 1–28 (MASVLLTRRLACSFRHNHRLLVPGWRHI) directs the protein to the mitochondrion. A [2Fe-2S] cluster-binding site is contributed by cysteine 163. Position 164 to 165 (164 to 165 (GS)) interacts with pyridoxal 5'-phosphate. [2Fe-2S] cluster is bound at residue cysteine 166. Arginine 220 lines the substrate pocket. N6-succinyllysine is present on lysine 231. Residue lysine 252 is modified to N6-acetyllysine; alternate. Residue lysine 252 is modified to N6-succinyllysine; alternate. N6-acetyllysine occurs at positions 279 and 318. Lysine 357 is subject to N6-(pyridoxal phosphate)lysine. Residue threonine 381 coordinates pyridoxal 5'-phosphate. The residue at position 413 (lysine 413) is an N6-acetyllysine; alternate. Lysine 413 carries the N6-succinyllysine; alternate modification. Residues lysine 452 and lysine 470 each carry the N6-acetyllysine modification.

The protein belongs to the class-III pyridoxal-phosphate-dependent aminotransferase family. Homodimer; disulfide-linked. Pyridoxal 5'-phosphate serves as cofactor. Requires [2Fe-2S] cluster as cofactor.

The protein localises to the mitochondrion matrix. It catalyses the reaction 4-aminobutanoate + 2-oxoglutarate = succinate semialdehyde + L-glutamate. The enzyme catalyses (S)-3-amino-2-methylpropanoate + 2-oxoglutarate = 2-methyl-3-oxopropanoate + L-glutamate. In terms of biological role, catalyzes the conversion of gamma-aminobutyrate and L-beta-aminoisobutyrate to succinate semialdehyde and methylmalonate semialdehyde, respectively. Can also convert delta-aminovalerate and beta-alanine. This Sus scrofa (Pig) protein is 4-aminobutyrate aminotransferase, mitochondrial (ABAT).